The chain runs to 254 residues: PSME3-interacting protein (254 aa).

An N-acetylmethionine modification is found at Met-1. Ser-17 is subject to Phosphoserine. Basic and acidic residues predominate over residues 22-39; sequence DERRKRRQEEWEKVRKPE. The disordered stretch occupies residues 22–52; sequence DERRKRRQEEWEKVRKPEDPEECPEEVYDPR. Lys-139 is subject to N6-acetyllysine. The interval 155–195 is disordered; that stretch reads GAVKHKSSESGNSVKRLKPDPEPDDKNQEPSSCKSLGNTSL. Over residues 171-182 the composition is skewed to basic and acidic residues; sequence LKPDPEPDDKNQ. A compositionally biased stretch (polar residues) spans 183–195; that stretch reads EPSSCKSLGNTSL. The interval 201–254 is interaction with PSME3; the sequence is HCPSAAVCIGILPGLGAYSGSSDSESSSDSEGTINATGKIVSSIFRTNTFLEAP. Phosphoserine; by CK2 is present on residues Ser-222 and Ser-228.

Interacts (via C-terminus) with both free and 20S proteasome-bound forms of the proteasome activator complex subunit PSME3; the interaction is direct. Post-translationally, phosphorylation by CK2 stabilizes the interaction with PSME3.

The protein localises to the nucleus. Its function is as follows. Promotes the association of the proteasome activator complex subunit PSME3 with the 20S proteasome and regulates its activity. Inhibits PSME3-mediated degradation of some proteasome substrates, probably by affecting their diffusion rate into the catalytic chamber of the proteasome. Also inhibits the interaction of PSME3 with COIL, inhibits accumulation of PSME3 in Cajal bodies and positively regulates the number of Cajal bodies in the nucleus. This Homo sapiens (Human) protein is PSME3-interacting protein.